The sequence spans 881 residues: Mechanosensitive ion channel protein 4 (881 aa).

The segment at 35 to 245 (FWHNDKSSKP…EEEDPFSEED (211 aa)) is disordered. The segment covering 56-66 (FMRRSSEKSEE) has biased composition (basic and acidic residues). Composition is skewed to polar residues over residues 73–82 (LINQFLNKQK), 100–118 (QKNTVPPLSSTAVSGSASP), and 206–230 (TPRSGNLNPGFSGRNTKPGTPNQGG). The span at 234–245 (LEEEEDPFSEED) shows a compositional bias: acidic residues. Transmembrane regions (helical) follow at residues 255-275 (ICVWVIIEWIFLILIIASLIC), 297-317 (VMVLVLICGRLVSSWIVKLFV), 339-359 (KPVQNCLWLGLVLIAWHFLFD), and 377-397 (VLICLLVAVIIWLIKTLLVKV). Residues 457–501 (GPKAVSSPPQVTVGSGRLQKSPSRVGKSPVLSRSGSKKEGGEEGI) form a disordered region. The segment covering 463 to 478 (SPPQVTVGSGRLQKSP) has biased composition (polar residues). A compositionally biased stretch (basic and acidic residues) spans 492–501 (SKKEGGEEGI). The next 2 membrane-spanning stretches (helical) occupy residues 643-663 (IVDVLVSIVILIIWLLILGIA) and 678-698 (VVFVFGNSCKTIFEAVIFVFV).

This sequence belongs to the MscS (TC 1.A.23) family.

It is found in the membrane. Mechanosensitive channel that opens in response to stretch forces in the membrane lipid bilayer. The chain is Mechanosensitive ion channel protein 4 (MSL4) from Arabidopsis thaliana (Mouse-ear cress).